We begin with the raw amino-acid sequence, 1081 residues long: Carbamoyl phosphate synthase large chain (1081 aa).

A carboxyphosphate synthetic domain region spans residues 1–410 (MPKRTDIKTI…SFQKALRGLE (410 aa)). 12 residues coordinate ATP: R129, R176, G182, G183, E215, L217, E222, G248, I249, H250, Q292, and E306. Residues 133-335 (KEAMTKIGLG…IAKVAAKLAV (203 aa)) enclose the ATP-grasp 1 domain. 3 residues coordinate Mg(2+): Q292, E306, and N308. Residues Q292, E306, and N308 each contribute to the Mn(2+) site. The interval 411-558 (VGVDGLDEKS…YEAEHGECEA (148 aa)) is oligomerization domain. The tract at residues 559-944 (DPTERKKIMV…ALFKSQLAAG (386 aa)) is carbamoyl phosphate synthetic domain. The ATP-grasp 2 domain maps to 683–878 (QKLLHDLGLR…LAKVAARCMA (196 aa)). Residues R719, R758, L760, E765, G790, V791, H792, S793, Q833, and E849 each coordinate ATP. Mg(2+)-binding residues include Q833, E849, and N851. 3 residues coordinate Mn(2+): Q833, E849, and N851. The 137-residue stretch at 945–1081 (SRLPEKGTVL…YDLQGLHASL (137 aa)) folds into the MGS-like domain. Residues 945-1081 (SRLPEKGTVL…YDLQGLHASL (137 aa)) form an allosteric domain region.

Belongs to the CarB family. Composed of two chains; the small (or glutamine) chain promotes the hydrolysis of glutamine to ammonia, which is used by the large (or ammonia) chain to synthesize carbamoyl phosphate. Tetramer of heterodimers (alpha,beta)4. It depends on Mg(2+) as a cofactor. The cofactor is Mn(2+).

The enzyme catalyses hydrogencarbonate + L-glutamine + 2 ATP + H2O = carbamoyl phosphate + L-glutamate + 2 ADP + phosphate + 2 H(+). The catalysed reaction is hydrogencarbonate + NH4(+) + 2 ATP = carbamoyl phosphate + 2 ADP + phosphate + 2 H(+). It participates in amino-acid biosynthesis; L-arginine biosynthesis; carbamoyl phosphate from bicarbonate: step 1/1. The protein operates within pyrimidine metabolism; UMP biosynthesis via de novo pathway; (S)-dihydroorotate from bicarbonate: step 1/3. In terms of biological role, large subunit of the glutamine-dependent carbamoyl phosphate synthetase (CPSase). CPSase catalyzes the formation of carbamoyl phosphate from the ammonia moiety of glutamine, carbonate, and phosphate donated by ATP, constituting the first step of 2 biosynthetic pathways, one leading to arginine and/or urea and the other to pyrimidine nucleotides. The large subunit (synthetase) binds the substrates ammonia (free or transferred from glutamine from the small subunit), hydrogencarbonate and ATP and carries out an ATP-coupled ligase reaction, activating hydrogencarbonate by forming carboxy phosphate which reacts with ammonia to form carbamoyl phosphate. The chain is Carbamoyl phosphate synthase large chain from Ralstonia nicotianae (strain ATCC BAA-1114 / GMI1000) (Ralstonia solanacearum).